A 416-amino-acid chain; its full sequence is Enterobactin exporter EntS (416 aa).

Over M1–A21 the chain is Cytoplasmic. The chain crosses the membrane as a helical span at residues V22–V42. Over Q43–G55 the chain is Periplasmic. A helical transmembrane segment spans residues L56–A76. Residues D77–K83 are Cytoplasmic-facing. The chain crosses the membrane as a helical span at residues V84–L104. Residues L105 to S109 lie on the Periplasmic side of the membrane. A helical transmembrane segment spans residues L110–A130. Topologically, residues L131–R156 are cytoplasmic. The helical transmembrane segment at L157–W177 threads the bilayer. Residue N178 is a topological domain, periplasmic. Residues Y179 to L199 traverse the membrane as a helical segment. Topologically, residues P200–R218 are cytoplasmic. The helical transmembrane segment at F219 to A239 threads the bilayer. Over S240–S256 the chain is Periplasmic. A helical transmembrane segment spans residues A257–T277. The Cytoplasmic portion of the chain corresponds to S278–P287. Residues G288 to L307 traverse the membrane as a helical segment. Residues M308–L313 are Periplasmic-facing. Residues G314 to L336 traverse the membrane as a helical segment. Residues Q337–N356 are Cytoplasmic-facing. The helical transmembrane segment at V357–V377 threads the bilayer. A topological domain (periplasmic) is located at residue A378. The chain crosses the membrane as a helical span at residues S379 to V399. Topologically, residues E400–S416 are cytoplasmic.

It belongs to the major facilitator superfamily. EntS (TC 2.A.1.38) family.

Its subcellular location is the cell inner membrane. Functionally, component of an export pathway for enterobactin. The protein is Enterobactin exporter EntS of Escherichia coli O6:H1 (strain CFT073 / ATCC 700928 / UPEC).